The sequence spans 574 residues: Arginine--tRNA ligase (574 aa).

The 'HIGH' region motif lies at 126–136 (PNIAKRMHVGH).

Belongs to the class-I aminoacyl-tRNA synthetase family. As to quaternary structure, monomer.

It is found in the cytoplasm. The enzyme catalyses tRNA(Arg) + L-arginine + ATP = L-arginyl-tRNA(Arg) + AMP + diphosphate. The polypeptide is Arginine--tRNA ligase (Chloroflexus aggregans (strain MD-66 / DSM 9485)).